An 843-amino-acid polypeptide reads, in one-letter code: Protein P (843 aa).

The segment at 1-177 (MPLSYQHFRK…FCGSPYSWEQ (177 aa)) is terminal protein domain (TP). A spacer region spans residues 178–346 (ELQHGRLVFQ…YCLSHLINLH (169 aa)). 2 disordered regions span residues 218 to 243 (LKQS…SGSI) and 291 to 315 (TAQR…AGSQ). The polymerase/reverse transcriptase domain (RT) stretch occupies residues 347–690 (EDWGPCIEHG…YLNLYPVARQ (344 aa)). One can recognise a Reverse transcriptase domain in the interval 357-600 (EHNIRIPRTP…YSLNFMGYVI (244 aa)). Asp429, Asp551, and Asp552 together coordinate Mg(2+).

The protein belongs to the hepadnaviridae P protein family.

It catalyses the reaction DNA(n) + a 2'-deoxyribonucleoside 5'-triphosphate = DNA(n+1) + diphosphate. The catalysed reaction is Endonucleolytic cleavage to 5'-phosphomonoester.. With respect to regulation, activated by host HSP70 and HSP40 in vitro to be able to bind the epsilon loop of the pgRNA. Because deletion of the RNase H region renders the protein partly chaperone-independent, the chaperones may be needed indirectly to relieve occlusion of the RNA-binding site by this domain. Inhibited by several reverse-transcriptase inhibitors: Lamivudine, Adefovir and Entecavir. Multifunctional enzyme that converts the viral RNA genome into dsDNA in viral cytoplasmic capsids. This enzyme displays a DNA polymerase activity that can copy either DNA or RNA templates, and a ribonuclease H (RNase H) activity that cleaves the RNA strand of RNA-DNA heteroduplexes in a partially processive 3'- to 5'-endonucleasic mode. Neo-synthesized pregenomic RNA (pgRNA) are encapsidated together with the P protein, and reverse-transcribed inside the nucleocapsid. Initiation of reverse-transcription occurs first by binding the epsilon loop on the pgRNA genome, and is initiated by protein priming, thereby the 5'-end of (-)DNA is covalently linked to P protein. Partial (+)DNA is synthesized from the (-)DNA template and generates the relaxed circular DNA (RC-DNA) genome. After budding and infection, the RC-DNA migrates in the nucleus, and is converted into a plasmid-like covalently closed circular DNA (cccDNA). The activity of P protein does not seem to be necessary for cccDNA generation, and is presumably released from (+)DNA by host nuclear DNA repair machinery. This chain is Protein P, found in Hepatitis B virus genotype C subtype ayw (isolate Australia/AustRC/1992) (HBV-C).